The chain runs to 327 residues: Elongation factor P--(R)-beta-lysine ligase (327 aa).

Position 78–80 (S78–E80) interacts with substrate. ATP-binding positions include R102–Q104 and N111. Y120 serves as a coordination point for substrate. E246–L247 is an ATP binding site. E253 lines the substrate pocket. G302 contacts ATP.

Belongs to the class-II aminoacyl-tRNA synthetase family. EpmA subfamily. As to quaternary structure, homodimer.

The enzyme catalyses D-beta-lysine + L-lysyl-[protein] + ATP = N(6)-((3R)-3,6-diaminohexanoyl)-L-lysyl-[protein] + AMP + diphosphate + H(+). With EpmB is involved in the beta-lysylation step of the post-translational modification of translation elongation factor P (EF-P). Catalyzes the ATP-dependent activation of (R)-beta-lysine produced by EpmB, forming a lysyl-adenylate, from which the beta-lysyl moiety is then transferred to the epsilon-amino group of a conserved specific lysine residue in EF-P. This Baumannia cicadellinicola subsp. Homalodisca coagulata protein is Elongation factor P--(R)-beta-lysine ligase.